The primary structure comprises 109 residues: Sperm-specific class P protein 9/11 (109 aa).

The MSP domain occupies 2–109 (SLTADPPACT…TVTIPMSATA (108 aa)).

Expressed at higher level in testis.

This is Sperm-specific class P protein 9/11 (ssp-9) from Caenorhabditis elegans.